The chain runs to 209 residues: MGKFQVISHPLIQHKLSILRREDTSTKDFRELVNEIAMLMGYEVSRDLPLEEVEIQTPITKTVQKQLSGKKLAIVPILRAGIGMVDGFLSLVPAAKVGHIGMYRDEETLEPVEYLVKLPEDIDQRQIFVVDPMLATGGSAILAVDSLKKRGAANIKFVCLVAAPEGVKKLQDAHPDIDIYTASLDEKLNENGYIVPGLGDAGDRLFGTK.

Residues arginine 79, arginine 104, and 131-139 contribute to the 5-phospho-alpha-D-ribose 1-diphosphate site; that span reads DPMLATGGS. Uracil contacts are provided by residues isoleucine 194 and 199 to 201; that span reads GDA. Aspartate 200 provides a ligand contact to 5-phospho-alpha-D-ribose 1-diphosphate.

This sequence belongs to the UPRTase family. Mg(2+) is required as a cofactor.

It catalyses the reaction UMP + diphosphate = 5-phospho-alpha-D-ribose 1-diphosphate + uracil. It functions in the pathway pyrimidine metabolism; UMP biosynthesis via salvage pathway; UMP from uracil: step 1/1. Allosterically activated by GTP. Catalyzes the conversion of uracil and 5-phospho-alpha-D-ribose 1-diphosphate (PRPP) to UMP and diphosphate. This is Uracil phosphoribosyltransferase from Streptococcus salivarius.